Consider the following 449-residue polypeptide: UDP-N-acetylmuramoylalanine--D-glutamate ligase (449 aa).

118–124 is a binding site for ATP; the sequence is GTNGKTT.

The protein belongs to the MurCDEF family.

Its subcellular location is the cytoplasm. The catalysed reaction is UDP-N-acetyl-alpha-D-muramoyl-L-alanine + D-glutamate + ATP = UDP-N-acetyl-alpha-D-muramoyl-L-alanyl-D-glutamate + ADP + phosphate + H(+). It participates in cell wall biogenesis; peptidoglycan biosynthesis. In terms of biological role, cell wall formation. Catalyzes the addition of glutamate to the nucleotide precursor UDP-N-acetylmuramoyl-L-alanine (UMA). This Staphylococcus carnosus (strain TM300) protein is UDP-N-acetylmuramoylalanine--D-glutamate ligase.